The following is a 257-amino-acid chain: 3-dehydroquinate dehydratase (257 aa).

3-dehydroquinate contacts are provided by residues 50–52 (EWR) and Arg86. The active-site Proton donor/acceptor is His147. The active-site Schiff-base intermediate with substrate is the Lys174. 3-dehydroquinate contacts are provided by Arg216, Ser235, and Gln239.

This sequence belongs to the type-I 3-dehydroquinase family. As to quaternary structure, homodimer.

The enzyme catalyses 3-dehydroquinate = 3-dehydroshikimate + H2O. It functions in the pathway metabolic intermediate biosynthesis; chorismate biosynthesis; chorismate from D-erythrose 4-phosphate and phosphoenolpyruvate: step 3/7. Functionally, involved in the third step of the chorismate pathway, which leads to the biosynthesis of aromatic amino acids. Catalyzes the cis-dehydration of 3-dehydroquinate (DHQ) and introduces the first double bond of the aromatic ring to yield 3-dehydroshikimate. This chain is 3-dehydroquinate dehydratase, found in Geobacillus kaustophilus (strain HTA426).